Reading from the N-terminus, the 144-residue chain is Large ribosomal subunit protein uL11 (144 aa).

This sequence belongs to the universal ribosomal protein uL11 family. As to quaternary structure, part of the ribosomal stalk of the 50S ribosomal subunit. Interacts with L10 and the large rRNA to form the base of the stalk. L10 forms an elongated spine to which L12 dimers bind in a sequential fashion forming a multimeric L10(L12)X complex. In terms of processing, one or more lysine residues are methylated.

Its function is as follows. Forms part of the ribosomal stalk which helps the ribosome interact with GTP-bound translation factors. This chain is Large ribosomal subunit protein uL11, found in Polaromonas sp. (strain JS666 / ATCC BAA-500).